The following is a 511-amino-acid chain: Cytochrome P450 4B1 (511 aa).

A heme-binding site is contributed by glutamate 315. Serine 436 bears the Phosphoserine mark. Position 453 (cysteine 453) interacts with heme.

It belongs to the cytochrome P450 family. Requires heme as cofactor. In terms of tissue distribution, detected in the liver and lung (at protein level).

Its subcellular location is the endoplasmic reticulum membrane. It is found in the microsome membrane. The catalysed reaction is an organic molecule + reduced [NADPH--hemoprotein reductase] + O2 = an alcohol + oxidized [NADPH--hemoprotein reductase] + H2O + H(+). Its function is as follows. Cytochromes P450 are a group of heme-thiolate monooxygenases. In liver microsomes, this enzyme is involved in an NADPH-dependent electron transport pathway. It oxidizes a variety of structurally unrelated compounds, including steroids, fatty acids, and xenobiotics. This chain is Cytochrome P450 4B1 (CYP4B1), found in Homo sapiens (Human).